The primary structure comprises 129 residues: Glycine cleavage system H protein (129 aa).

A Lipoyl-binding domain is found at 24 to 106; sequence VFTVGISEHA…YGDGWLFKIK (83 aa). At lysine 65 the chain carries N6-lipoyllysine.

It belongs to the GcvH family. In terms of assembly, the glycine cleavage system is composed of four proteins: P, T, L and H. (R)-lipoate is required as a cofactor.

Functionally, the glycine cleavage system catalyzes the degradation of glycine. The H protein shuttles the methylamine group of glycine from the P protein to the T protein. The chain is Glycine cleavage system H protein from Alteromonas mediterranea (strain DSM 17117 / CIP 110805 / LMG 28347 / Deep ecotype).